A 134-amino-acid polypeptide reads, in one-letter code: Fluoride-specific ion channel FluC 2 (134 aa).

4 consecutive transmembrane segments (helical) span residues 10–30, 43–63, 67–87, and 100–120; these read LSAE…GALL, LLVN…PAAP, LLVG…MVDA, and FGLI…GFWL. Positions 75 and 78 each coordinate Na(+).

Belongs to the fluoride channel Fluc/FEX (TC 1.A.43) family.

It is found in the cell inner membrane. It carries out the reaction fluoride(in) = fluoride(out). Its activity is regulated as follows. Na(+) is not transported, but it plays an essential structural role and its presence is essential for fluoride channel function. Its function is as follows. Fluoride-specific ion channel. Important for reducing fluoride concentration in the cell, thus reducing its toxicity. The chain is Fluoride-specific ion channel FluC 2 from Synechococcus sp. (strain CC9902).